We begin with the raw amino-acid sequence, 916 residues long: Nitrate reductase [NADH] 1 (916 aa).

A disordered region spans residues 1-77 (MAASVQPRQF…DDEEEEQEDW (77 aa)). Acidic residues predominate over residues 66-76 (GSDDEEEEQED). Cys192 lines the Mo-molybdopterin pocket. Residues 541–616 (GKQFTMSEVR…LDTYRIGELI (76 aa)) form the Cytochrome b5 heme-binding domain. Positions 576 and 599 each coordinate heme. The FAD-binding FR-type domain occupies 656 to 768 (RDKVPCQLVD…KGPLGHVEYT (113 aa)). Residues 708–711 (RAYT), 725–729 (LIKVY), Phe730, Phe737, 742–744 (LMT), Ser792, and Thr795 each bind FAD.

It belongs to the nitrate reductase family. As to quaternary structure, homodimer. It depends on FAD as a cofactor. Heme is required as a cofactor. The cofactor is Mo-molybdopterin.

It catalyses the reaction nitrite + NAD(+) + H2O = nitrate + NADH + H(+). Nitrate reductase is a key enzyme involved in the first step of nitrate assimilation in plants, fungi and bacteria. The polypeptide is Nitrate reductase [NADH] 1 (NIA1) (Oryza sativa subsp. japonica (Rice)).